We begin with the raw amino-acid sequence, 110 residues long: Thiosulfate sulfurtransferase GlpE (110 aa).

The 89-residue stretch at 19 to 107 (EDSLAVLVDI…WRRQALPIIQ (89 aa)) folds into the Rhodanese domain. The Cysteine persulfide intermediate role is filled by Cys-67.

This sequence belongs to the GlpE family.

Its subcellular location is the cytoplasm. It catalyses the reaction thiosulfate + hydrogen cyanide = thiocyanate + sulfite + 2 H(+). The enzyme catalyses thiosulfate + [thioredoxin]-dithiol = [thioredoxin]-disulfide + hydrogen sulfide + sulfite + 2 H(+). Its function is as follows. Transferase that catalyzes the transfer of sulfur from thiosulfate to thiophilic acceptors such as cyanide or dithiols. May function in a CysM-independent thiosulfate assimilation pathway by catalyzing the conversion of thiosulfate to sulfite, which can then be used for L-cysteine biosynthesis. The sequence is that of Thiosulfate sulfurtransferase GlpE from Photobacterium profundum (strain SS9).